The primary structure comprises 42 residues: uncharacterized protein (42 aa).

The protein resides in the plastid. It is found in the chloroplast. This is an uncharacterized protein from Diacronema lutheri (Unicellular marine alga).